Here is a 210-residue protein sequence, read N- to C-terminus: Fimbriae Z protein (210 aa).

Residues 5 to 121 (SVIIMDTHPI…DIFHAVQMIL (117 aa)) enclose the Response regulatory domain. At Asp-56 the chain carries 4-aspartylphosphate. In terms of domain architecture, HTH luxR-type spans 143–208 (NSSTVTVLSN…ELIDYAKLYE (66 aa)). The segment at residues 167–186 (NKEIADKLLLSNKTVSAHKS) is a DNA-binding region (H-T-H motif).

The protein localises to the cytoplasm. This Escherichia coli O157:H7 protein is Fimbriae Z protein (fimZ).